Reading from the N-terminus, the 142-residue chain is ATP synthase epsilon chain (142 aa).

It belongs to the ATPase epsilon chain family. In terms of assembly, F-type ATPases have 2 components, CF(1) - the catalytic core - and CF(0) - the membrane proton channel. CF(1) has five subunits: alpha(3), beta(3), gamma(1), delta(1), epsilon(1). CF(0) has three main subunits: a, b and c.

Its subcellular location is the cell inner membrane. Functionally, produces ATP from ADP in the presence of a proton gradient across the membrane. The polypeptide is ATP synthase epsilon chain (Shewanella oneidensis (strain ATCC 700550 / JCM 31522 / CIP 106686 / LMG 19005 / NCIMB 14063 / MR-1)).